The primary structure comprises 609 residues: Spore coat protein homolog 1 (609 aa).

Residues 1–17 form the signal peptide; the sequence is MKSLLFVVFIFLTTTYA. 3 N-linked (GlcNAc...) asparagine glycosylation sites follow: N82, N397, and N440. A disordered region spans residues 527-547; it reads TVTQVPEAPGTDGTPSESTAW. A lipid anchor (GPI-anchor amidated serine) is attached at S584. A propeptide spans 585–609 (removed in mature form); that stretch reads SSSIKRTPCILPLVILASTLFASFF.

Its subcellular location is the cell membrane. Its function is as follows. May play a role in cell adhesion. In Rhizopus delemar (strain RA 99-880 / ATCC MYA-4621 / FGSC 9543 / NRRL 43880) (Mucormycosis agent), this protein is Spore coat protein homolog 1.